An 82-amino-acid polypeptide reads, in one-letter code: Putative membrane protein insertion efficiency factor (82 aa).

The tract at residues histidine 61–glutamate 82 is disordered.

Belongs to the UPF0161 family.

The protein localises to the cell inner membrane. Could be involved in insertion of integral membrane proteins into the membrane. The sequence is that of Putative membrane protein insertion efficiency factor from Fusobacterium nucleatum subsp. nucleatum (strain ATCC 25586 / DSM 15643 / BCRC 10681 / CIP 101130 / JCM 8532 / KCTC 2640 / LMG 13131 / VPI 4355).